Reading from the N-terminus, the 556-residue chain is Phosphoglucomutase (556 aa).

Alpha-D-glucose 1,6-bisphosphate-binding residues include Arg22 and Ser114. Residue Ser114 is the Phosphoserine intermediate of the active site. The Mg(2+) site is built by Ser114, Asp279, Asp281, and Asp283. Residue Ser114 is modified to Phosphoserine. Alpha-D-glucose 1,6-bisphosphate-binding residues include Asp283, Arg284, Thr347, Glu366, Ser368, and Lys379.

This sequence belongs to the phosphohexose mutase family. In terms of assembly, monomer. It depends on Mg(2+) as a cofactor.

It is found in the cytoplasm. The catalysed reaction is alpha-D-glucose 1-phosphate = alpha-D-glucose 6-phosphate. It catalyses the reaction O-phospho-L-seryl-[protein] + alpha-D-glucose 1-phosphate = alpha-D-glucose 1,6-bisphosphate + L-seryl-[protein]. The enzyme catalyses alpha-D-glucose 1,6-bisphosphate + L-seryl-[protein] = O-phospho-L-seryl-[protein] + alpha-D-glucose 6-phosphate. In terms of biological role, catalyzes the reversible isomerization of alpha-D-glucose 1-phosphate to alpha-D-glucose 6-phosphate. The mechanism proceeds via the intermediate compound alpha-D-glucose 1,6-bisphosphate. Key enzyme in hexose metabolism. The reverse reaction is an essential step for biosynthesis because glucose 1-phosphate is the starting point for the synthesis of UDP-glucose, which acts as a precursor for the synthesis of oligosaccharides and trehalose. This is Phosphoglucomutase (pgmB) from Emericella nidulans (strain FGSC A4 / ATCC 38163 / CBS 112.46 / NRRL 194 / M139) (Aspergillus nidulans).